A 465-amino-acid chain; its full sequence is Probable glycine dehydrogenase (decarboxylating) subunit 1 (465 aa).

Belongs to the GcvP family. N-terminal subunit subfamily. As to quaternary structure, the glycine cleavage system is composed of four proteins: P, T, L and H. In this organism, the P 'protein' is a heterodimer of two subunits.

It catalyses the reaction N(6)-[(R)-lipoyl]-L-lysyl-[glycine-cleavage complex H protein] + glycine + H(+) = N(6)-[(R)-S(8)-aminomethyldihydrolipoyl]-L-lysyl-[glycine-cleavage complex H protein] + CO2. Its function is as follows. The glycine cleavage system catalyzes the degradation of glycine. The P protein binds the alpha-amino group of glycine through its pyridoxal phosphate cofactor; CO(2) is released and the remaining methylamine moiety is then transferred to the lipoamide cofactor of the H protein. The sequence is that of Probable glycine dehydrogenase (decarboxylating) subunit 1 from Aeropyrum pernix (strain ATCC 700893 / DSM 11879 / JCM 9820 / NBRC 100138 / K1).